The primary structure comprises 216 residues: Vascular endothelial growth factor A (216 aa).

The signal sequence occupies residues 1-26; the sequence is MNFLLTWIHWGLAALLYFHNAKVLQA. Disulfide bonds link Cys52/Cys94, Cys83/Cys128, and Cys87/Cys130. An N-linked (GlcNAc...) asparagine glycan is attached at Asn101. Residues 140–161 are disordered; that stretch reads QEKKSKREKGKGQKRKRKRGRY. A compositionally biased stretch (basic residues) spans 145 to 161; the sequence is KREKGKGQKRKRKRGRY.

Belongs to the PDGF/VEGF growth factor family. In terms of assembly, homodimer; disulfide-linked. Also found as heterodimer with PGF. Interacts to the FLT1/VEGFR1 and KDR/VEGFR2 receptors, heparan sulfate and heparin. In terms of tissue distribution, expressed in venom gland, heart, brain, liver, skeletal muscle and kidney.

The protein localises to the secreted. Functionally, growth factor active in angiogenesis, vasculogenesis and endothelial cell growth. Induces endothelial cell proliferation, promotes cell migration, inhibits apoptosis and induces permeabilization of blood vessels. The protein is Vascular endothelial growth factor A of Protobothrops flavoviridis (Habu).